The sequence spans 596 residues: Aspartate--tRNA(Asp/Asn) ligase (596 aa).

L-aspartate is bound at residue Glu-175. The aspartate stretch occupies residues 199–202 (QMFK). L-aspartate-binding residues include Arg-221 and His-451. Position 221–223 (221–223 (RDE)) interacts with ATP. Glu-485 contacts ATP. Position 492 (Arg-492) interacts with L-aspartate. An ATP-binding site is contributed by 537 to 540 (GVDR).

This sequence belongs to the class-II aminoacyl-tRNA synthetase family. Type 1 subfamily. Homodimer.

The protein localises to the cytoplasm. The catalysed reaction is tRNA(Asx) + L-aspartate + ATP = L-aspartyl-tRNA(Asx) + AMP + diphosphate. Functionally, aspartyl-tRNA synthetase with relaxed tRNA specificity since it is able to aspartylate not only its cognate tRNA(Asp) but also tRNA(Asn). Reaction proceeds in two steps: L-aspartate is first activated by ATP to form Asp-AMP and then transferred to the acceptor end of tRNA(Asp/Asn). In Zymomonas mobilis subsp. mobilis (strain ATCC 31821 / ZM4 / CP4), this protein is Aspartate--tRNA(Asp/Asn) ligase.